A 770-amino-acid chain; its full sequence is Low-density lipoprotein receptor-related protein 3 (770 aa).

A signal peptide spans 1–36 (MEKRAAAGPEGAPGARAPLAVVCLVNLFLTGRLSSA). Over 37–496 (VPALAACSGK…HGCLAAVPRK (460 aa)) the chain is Extracellular. 9 cysteine pairs are disulfide-bonded: Cys-43–Cys-72, Cys-99–Cys-120, Cys-166–Cys-178, Cys-173–Cys-191, Cys-185–Cys-200, Cys-212–Cys-227, Cys-219–Cys-240, Cys-234–Cys-249, and Cys-254–Cys-282. One can recognise a CUB 1 domain in the interval 43–159 (CSGKLEQHTE…QGFRLSYIRG (117 aa)). N-linked (GlcNAc...) asparagine glycosylation occurs at Asn-71. LDL-receptor class A domains follow at residues 165–201 (SCQT…GNCS) and 211–250 (LCPG…AGCP). An N-linked (GlcNAc...) asparagine glycan is attached at Asn-199. A CUB 2 domain is found at 254 to 365 (CGRRLGSFYG…HGFNATYQVK (112 aa)). The N-linked (GlcNAc...) asparagine glycan is linked to Asn-359. LDL-receptor class A domains are found at residues 415–453 (ACPP…KNCF) and 454–490 (SCQP…HGCL). 6 disulfides stabilise this stretch: Cys-416-Cys-430, Cys-423-Cys-443, Cys-437-Cys-452, Cys-455-Cys-467, Cys-462-Cys-480, and Cys-474-Cys-489. Residues 497–517 (VITAALIGSLVCGLLLVIALG) traverse the membrane as a helical segment. Topologically, residues 518 to 770 (CAFKLYSLRT…ASDDEALLVC (253 aa)) are cytoplasmic. The interval 639-753 (LLQAAPGPVP…PLGVCRSPPP (115 aa)) is disordered. The span at 689 to 703 (RDPEYRPEDKERKAC) shows a compositional bias: basic and acidic residues.

Belongs to the LDLR family. In terms of assembly, binds GGA1 and GGA2.

The protein resides in the membrane. It localises to the coated pit. Probable receptor, which may be involved in the internalization of lipophilic molecules and/or signal transduction. Its precise role is however unclear, since it does not bind to very low density lipoprotein (VLDL) or to LRPAP1 in vitro. This is Low-density lipoprotein receptor-related protein 3 (Lrp3) from Rattus norvegicus (Rat).